The primary structure comprises 301 residues: Homoserine O-acetyltransferase (301 aa).

Cys-142 (acyl-thioester intermediate) is an active-site residue. Substrate is bound by residues Lys-163 and Ser-192. The Proton acceptor role is filled by His-235. Residue Glu-237 is part of the active site. Arg-249 contacts substrate.

This sequence belongs to the MetA family.

It is found in the cytoplasm. It catalyses the reaction L-homoserine + acetyl-CoA = O-acetyl-L-homoserine + CoA. It participates in amino-acid biosynthesis; L-methionine biosynthesis via de novo pathway; O-acetyl-L-homoserine from L-homoserine: step 1/1. Transfers an acetyl group from acetyl-CoA to L-homoserine, forming acetyl-L-homoserine. In Bacillus cereus (strain B4264), this protein is Homoserine O-acetyltransferase.